The sequence spans 208 residues: Superoxide dismutase [Mn] 2 (208 aa).

Residues His28, His83, Asp165, and His169 each coordinate Mn(2+).

This sequence belongs to the iron/manganese superoxide dismutase family. Homodimer. Requires Mn(2+) as cofactor.

The enzyme catalyses 2 superoxide + 2 H(+) = H2O2 + O2. Functionally, destroys superoxide anion radicals which are normally produced within the cells and which are toxic to biological systems. The protein is Superoxide dismutase [Mn] 2 (sodA2) of Bacillus cereus (strain ATCC 14579 / DSM 31 / CCUG 7414 / JCM 2152 / NBRC 15305 / NCIMB 9373 / NCTC 2599 / NRRL B-3711).